A 142-amino-acid chain; its full sequence is Large ribosomal subunit protein uL11 (142 aa).

The protein belongs to the universal ribosomal protein uL11 family. In terms of assembly, part of the ribosomal stalk of the 50S ribosomal subunit. Interacts with L10 and the large rRNA to form the base of the stalk. L10 forms an elongated spine to which L12 dimers bind in a sequential fashion forming a multimeric L10(L12)X complex. Post-translationally, one or more lysine residues are methylated.

Forms part of the ribosomal stalk which helps the ribosome interact with GTP-bound translation factors. This chain is Large ribosomal subunit protein uL11, found in Pelotomaculum thermopropionicum (strain DSM 13744 / JCM 10971 / SI).